The primary structure comprises 4830 residues: Siderophore peptide synthetase fer3 (4830 aa).

An adenylation 1 region spans residues 197–623; that stretch reads LDQAEKFPDR…LGRMNAEQVK (427 aa). One can recognise a Carrier 1 domain in the interval 751-833; the sequence is ANEDPVTQAL…DLIPLLSDTT (83 aa). Ser788 is subject to O-(pantetheine 4'-phosphoryl)serine. The tract at residues 879–1317 is condensation 1; it reads QKIFPTTATQ…HSLMREPETT (439 aa). Residues 1358 to 1781 are adenylation 2; that stretch reads FENKAATEPE…IGRRDDLVKL (424 aa). In terms of domain architecture, Carrier 2 spans 1929–2005; the sequence is GEDGDLQCQV…MLIRGLATKT (77 aa). Ser1966 is subject to O-(pantetheine 4'-phosphoryl)serine. The condensation 2 stretch occupies residues 2048–2503; the sequence is IPCSTLQEGM…LLDQVVSLLT (456 aa). An adenylation 3 region spans residues 2573–2977; it reads AGTPETACIN…LGRRDEQEKI (405 aa). In terms of domain architecture, Carrier 3 spans 3122-3198; the sequence is RPLSSLEREI…DIAAELSDSK (77 aa). An O-(pantetheine 4'-phosphoryl)serine modification is found at Ser3159. A condensation 3 region spans residues 3232 to 3621; sequence KVLPCLPSQE…RDRDELRISA (390 aa). A Carrier 4 domain is found at 3685-3760; sequence TAAEEQIRDL…GLSKLLDQRQ (76 aa). Residue Ser3720 is modified to O-(pantetheine 4'-phosphoryl)serine. Residues 3779-4199 are condensation 4; it reads RYKATPLQAG…GVQIKAGASD (421 aa). The Carrier 5 domain maps to 4264–4340; the sequence is SLSTAEQDIV…RLTVATETRS (77 aa). Position 4301 is an O-(pantetheine 4'-phosphoryl)serine (Ser4301). A condensation 5 region spans residues 4381–4708; sequence VLPLLTGQQQ…DLVSRAEHQQ (328 aa).

The protein belongs to the NRP synthetase family.

It participates in siderophore biosynthesis. Functionally, nonribosomal peptide synthetase; part of the gene cluster that mediates the biosynthesis of siderophore ferrichrome A which is contributing to organismal virulence. The first step of ferrichrome A biosynthesis is performed by the HMG-CoA synthase hcs1 which catalyzes the generation of HMG-CoA and CoA using acetoacetyl-CoA and acetyl-CoA as substrates. The enoyl-CoA isomerase/hydratase fer4 then catalyzes the conversion of hcs1-produced HMG-CoA to methylglutaconyl-CoA. The acyltransferase fer5 then fuses the fer4-generated methylglutaconyl-CoA with sid1-generated hydroxyornithine to yield methylglutaconyl hydroxyornithine. Methylglutaconyl hydroxyornithine is then available for use by the NRPS fer3 to generate ferrichrome A. This Mycosarcoma maydis (Corn smut fungus) protein is Siderophore peptide synthetase fer3.